The primary structure comprises 83 residues: UPF0457 protein YnzG (83 aa).

It belongs to the UPF0457 family.

The polypeptide is UPF0457 protein YnzG (ynzG) (Bacillus subtilis (strain 168)).